Reading from the N-terminus, the 184-residue chain is Ribosome-recycling factor (184 aa).

Belongs to the RRF family.

The protein resides in the cytoplasm. Its function is as follows. Responsible for the release of ribosomes from messenger RNA at the termination of protein biosynthesis. May increase the efficiency of translation by recycling ribosomes from one round of translation to another. The polypeptide is Ribosome-recycling factor (Leptospira interrogans serogroup Icterohaemorrhagiae serovar copenhageni (strain Fiocruz L1-130)).